The chain runs to 148 residues: Large ribosomal subunit protein bL9 (148 aa).

The protein belongs to the bacterial ribosomal protein bL9 family.

Functionally, binds to the 23S rRNA. This chain is Large ribosomal subunit protein bL9, found in Marinobacter nauticus (strain ATCC 700491 / DSM 11845 / VT8) (Marinobacter aquaeolei).